The primary structure comprises 251 residues: Putative integrase/recombinase y4eF (251 aa).

The Core-binding (CB) domain occupies 1-40 (MLGREDIRTYQVYLANEKKLAPGSIHIALSALRFFFNVTL). The Tyr recombinase domain occupies 58-231 (KLPIILSPDE…ATNKVCATES (174 aa)). Active-site residues include Arg-93, Lys-118, His-183, Arg-186, and His-209. The O-(3'-phospho-DNA)-tyrosine intermediate role is filled by Tyr-218.

Belongs to the 'phage' integrase family.

This chain is Putative integrase/recombinase y4eF, found in Sinorhizobium fredii (strain NBRC 101917 / NGR234).